Reading from the N-terminus, the 363-residue chain is Protein RecA (363 aa).

ATP is bound at residue 79–86 (GPESSGKT).

Belongs to the RecA family.

Its subcellular location is the cytoplasm. In terms of biological role, can catalyze the hydrolysis of ATP in the presence of single-stranded DNA, the ATP-dependent uptake of single-stranded DNA by duplex DNA, and the ATP-dependent hybridization of homologous single-stranded DNAs. It interacts with LexA causing its activation and leading to its autocatalytic cleavage. In Methylobacterium sp. (strain 4-46), this protein is Protein RecA.